Here is a 454-residue protein sequence, read N- to C-terminus: Mitochondrial dynamics protein MID49 (454 aa).

At 1 to 22 (MAEFSQKRGKRRSDEGLGSMVD) the chain is on the mitochondrial intermembrane side. Phosphoserine is present on serine 13. The chain crosses the membrane as a helical span at residues 23–43 (FLLANARLVLGVGGAAVLGIA). The Cytoplasmic segment spans residues 44–454 (TLAVKRFIDR…SGLQEPEGLL (411 aa)). The disordered stretch occupies residues 76–119 (ATPHLQPRPPPAALSQPVLPLAPSSSAPEGPAETDPEVTPQLSS). A compositionally biased stretch (low complexity) spans 88–103 (ALSQPVLPLAPSSSAP).

The protein belongs to the MID49/MID51 family. In terms of assembly, interacts with DNM1L. In terms of tissue distribution, expressed in all tissues tested with highest expression in heart and skeletal muscle.

It localises to the mitochondrion outer membrane. Mitochondrial outer membrane protein involved in the regulation of mitochondrial organization. It is required for mitochondrial fission and promotes the recruitment and association of the fission mediator dynamin-related protein 1 (DNM1L) to the mitochondrial surface independently of the mitochondrial fission FIS1 and MFF proteins. Regulates DNM1L GTPase activity. In Homo sapiens (Human), this protein is Mitochondrial dynamics protein MID49 (MIEF2).